The chain runs to 364 residues: Probable endopolygalacturonase B (364 aa).

Positions 1 to 20 (MHFFQSSLVAATMGAALVAA) are cleaved as a signal peptide. Positions 21-29 (APAADLETR) are excised as a propeptide. The cysteines at positions 32 and 47 are disulfide-linked. N-linked (GlcNAc...) asparagine glycosylation is found at N138 and N141. PbH1 repeat units follow at residues 159 to 188 (SDHL…DVGS), 189 to 210 (STYI…AVNS), 211 to 231 (GEHI…SIGS), 240 to 261 (VNDV…RIKT), 269 to 291 (VTGV…VVQQ), and 303 to 324 (TNGV…TSSA). Residue D203 is the Proton donor of the active site. A disulfide bridge links C205 with C221. The active site involves H225. The cysteines at positions 331 and 336 are disulfide-linked. A glycan (N-linked (GlcNAc...) asparagine) is linked at N338. C355 and C364 are joined by a disulfide.

This sequence belongs to the glycosyl hydrolase 28 family.

The protein resides in the secreted. It catalyses the reaction (1,4-alpha-D-galacturonosyl)n+m + H2O = (1,4-alpha-D-galacturonosyl)n + (1,4-alpha-D-galacturonosyl)m.. In terms of biological role, involved in maceration and soft-rotting of plant tissue. Hydrolyzes the 1,4-alpha glycosidic bonds of de-esterified pectate in the smooth region of the plant cell wall. The chain is Probable endopolygalacturonase B (pgaB) from Aspergillus fumigatus (strain ATCC MYA-4609 / CBS 101355 / FGSC A1100 / Af293) (Neosartorya fumigata).